A 100-amino-acid chain; its full sequence is Small ribosomal subunit protein uS14 (100 aa).

The protein belongs to the universal ribosomal protein uS14 family. Part of the 30S ribosomal subunit. Contacts proteins S3 and S10.

Binds 16S rRNA, required for the assembly of 30S particles and may also be responsible for determining the conformation of the 16S rRNA at the A site. This chain is Small ribosomal subunit protein uS14, found in Thermosynechococcus vestitus (strain NIES-2133 / IAM M-273 / BP-1).